Consider the following 200-residue polypeptide: Recombination protein RecR (200 aa).

A C4-type zinc finger spans residues 59–74 (CDICGNVCETSPCPVC). Residues 82–177 (SVICVVEEPK…KVTRLASGLP (96 aa)) enclose the Toprim domain.

It belongs to the RecR family.

In terms of biological role, may play a role in DNA repair. It seems to be involved in an RecBC-independent recombinational process of DNA repair. It may act with RecF and RecO. The sequence is that of Recombination protein RecR from Bifidobacterium adolescentis (strain ATCC 15703 / DSM 20083 / NCTC 11814 / E194a).